The chain runs to 479 residues: Flap endonuclease 1 (479 aa).

Positions 1–106 (MGIKGLTKFI…SELEKRGEKR (106 aa)) are N-domain. Mg(2+) is bound at residue Asp-34. Arg-47 and Arg-72 together coordinate DNA. Mg(2+) is bound by residues Asp-88, Glu-160, Glu-162, Asp-181, and Asp-183. The I-domain stretch occupies residues 124-266 (EIKKQSGRTV…KTAYNLIKEY (143 aa)). Glu-160 contacts DNA. DNA-binding residues include Gly-244 and Asp-246. A Mg(2+)-binding site is contributed by Asp-246. The segment at 349-357 (TQRRLDTFF) is interaction with PCNA. The segment at 379-455 (AKGKGKKREL…NSDSGNIKNE (77 aa)) is disordered. Positions 403 to 428 (NIKDEKKNTDKMDELKNKSDENFVKD) are enriched in basic and acidic residues.

This sequence belongs to the XPG/RAD2 endonuclease family. FEN1 subfamily. In terms of assembly, interacts with PCNA. Three molecules of FEN1 bind to one PCNA trimer with each molecule binding to one PCNA monomer. PCNA stimulates the nuclease activity without altering cleavage specificity. The cofactor is Mg(2+). In terms of processing, phosphorylated. Phosphorylation upon DNA damage induces relocalization to the nuclear plasma.

The protein localises to the nucleus. The protein resides in the nucleolus. It localises to the nucleoplasm. It is found in the mitochondrion. Its function is as follows. Structure-specific nuclease with 5'-flap endonuclease and 5'-3' exonuclease activities involved in DNA replication and repair. During DNA replication, cleaves the 5'-overhanging flap structure that is generated by displacement synthesis when DNA polymerase encounters the 5'-end of a downstream Okazaki fragment. It enters the flap from the 5'-end and then tracks to cleave the flap base, leaving a nick for ligation. Also involved in the long patch base excision repair (LP-BER) pathway, by cleaving within the apurinic/apyrimidinic (AP) site-terminated flap. Acts as a genome stabilization factor that prevents flaps from equilibrating into structures that lead to duplications and deletions. Also possesses 5'-3' exonuclease activity on nicked or gapped double-stranded DNA, and exhibits RNase H activity. Also involved in replication and repair of rDNA and in repairing mitochondrial DNA. In Plasmodium chabaudi chabaudi, this protein is Flap endonuclease 1.